Here is a 491-residue protein sequence, read N- to C-terminus: FAD-dependent monooxygenase idtM (491 aa).

Positions 34, 48, 107, 307, and 320 each coordinate FAD. Residues 448–468 (ILSLVYVVAGLAMMYMSIYLV) form a helical membrane-spanning segment.

This sequence belongs to the paxM FAD-dependent monooxygenase family. It depends on FAD as a cofactor.

The protein localises to the membrane. It participates in secondary metabolite biosynthesis. FAD-dependent monooxygenase; part of the gene cluster that mediates the biosynthesis of paspalitrems, indole-diterpene (IDT) mycotoxins that are potent tremorgens in mammals. The geranylgeranyl diphosphate (GGPP) synthase idtG is proposed to catalyze the first step in IDT biosynthesis via catalysis of a series of iterative condensations of isopentenyl diphosphate (IPP) with dimethylallyl diphosphate (DMAPP), geranyl diphosphate (GPP), and farnesyl diphosphate (FPP), to form GGPP. Condensation of indole-3-glycerol phosphate with GGPP by the prenyltransferase idtC then forms 3-geranylgeranylindole (3-GGI). Epoxidation of the two terminal alkenes of the geranylgeranyl moiety by the FAD-dependent monooxygenase idtM, and cyclization by the terpene cyclase idtB then leads to the production of paspaline. The cytochrome P450 monooxygenase idtP then catalyzes oxidative elimination of the pendant methyl group at C-12 of paspaline and generates the C-10 ketone to yield 13-desoxypaxilline. The cytochrome P450 monooxygenase idtQ may catalyze the C-13 oxidation of 13-desoxypaxilline to afford paxilline. Considering that both paspalicine and paxilline were detected in C.paspali, idtQ also catalyzes the formation of paspalinine from 13-desoxypaxilline via paspalicine as an intermediate. Finally, the alpha-prenyltransferase idtF prenylates paspalinine at the C-20 or the C-21 positions to yield paspalitrems A and C, respectively. The hydroxylation of paspalitrem A at C-32 by a still unknown oxidase affords paspalitrem B. The chain is FAD-dependent monooxygenase idtM from Claviceps paspali (Rye ergot fungus).